Here is a 364-residue protein sequence, read N- to C-terminus: Chorismate synthase (364 aa).

Residues Arg-48 and Arg-54 each coordinate NADP(+). FMN is bound by residues 130–132 (RSS), 242–243 (NA), Gly-287, 302–306 (KPTSS), and Arg-328.

Belongs to the chorismate synthase family. Homotetramer. It depends on FMNH2 as a cofactor.

It carries out the reaction 5-O-(1-carboxyvinyl)-3-phosphoshikimate = chorismate + phosphate. It functions in the pathway metabolic intermediate biosynthesis; chorismate biosynthesis; chorismate from D-erythrose 4-phosphate and phosphoenolpyruvate: step 7/7. In terms of biological role, catalyzes the anti-1,4-elimination of the C-3 phosphate and the C-6 proR hydrogen from 5-enolpyruvylshikimate-3-phosphate (EPSP) to yield chorismate, which is the branch point compound that serves as the starting substrate for the three terminal pathways of aromatic amino acid biosynthesis. This reaction introduces a second double bond into the aromatic ring system. The protein is Chorismate synthase of Allorhizobium ampelinum (strain ATCC BAA-846 / DSM 112012 / S4) (Agrobacterium vitis (strain S4)).